A 395-amino-acid polypeptide reads, in one-letter code: Probable peptidoglycan glycosyltransferase FtsW (395 aa).

The Cytoplasmic segment spans residues 1 to 24; that stretch reads MADLAAGVAERGPRLSLWSSLDQR. A helical transmembrane segment spans residues 25–45; sequence LVWVVAATALLGLVMVASASI. The Periplasmic segment spans residues 46 to 62; sequence SMAEQATGDPFYFFKRQ. A helical transmembrane segment spans residues 63-83; that stretch reads IFFALLGLGMALALLQIPLAT. Residues 84 to 86 are Cytoplasmic-facing; sequence WER. The helical transmembrane segment at 87–107 threads the bilayer; the sequence is AGPGLLLGALALLVLVLIPGV. The Periplasmic portion of the chain corresponds to 108-116; it reads GREVNGAVR. The chain crosses the membrane as a helical span at residues 117 to 137; sequence WIPLGVFNLQVAEVVKVLLAL. Over 138-152 the chain is Cytoplasmic; it reads YLAGFLVRRQQQLRT. A helical transmembrane segment spans residues 153–173; sequence SMAAFLVPVLVSAACAFLLLL. At 174-178 the chain is on the periplasmic side; sequence QPDFG. Residues 179–199 form a helical membrane-spanning segment; it reads TALMLMALAVGLLYLAGAPLW. R200 is a topological domain (cytoplasmic). A helical transmembrane segment spans residues 201 to 221; that stretch reads FAALVGVLAAAAAALVVYSPY. At 222-276 the chain is on the periplasmic side; it reads RWQRVTAFMDPWSDPFNTGFQLTQSLIAIGRGDWLGVGLGGSVQKLFYLPEAHTD. A helical transmembrane segment spans residues 277-297; sequence FVFSVLAEELGWLGVLAVVLL. The Cytoplasmic segment spans residues 298 to 316; sequence FSYIVWRAMAVGWQCHRHR. Residues 317 to 337 traverse the membrane as a helical segment; that stretch reads LPFAGYLAWAVGLALGLQAFI. Residues 338–352 are Periplasmic-facing; it reads NMGVATGLLPTKGLT. A helical transmembrane segment spans residues 353–373; it reads LPLFSYGGSSALATGAMVGLL. At 374–395 the chain is on the cytoplasmic side; sequence LRCGYELAQARAEGRRPEEAAS.

Belongs to the SEDS family. FtsW subfamily.

Its subcellular location is the cell inner membrane. It catalyses the reaction [GlcNAc-(1-&gt;4)-Mur2Ac(oyl-L-Ala-gamma-D-Glu-L-Lys-D-Ala-D-Ala)](n)-di-trans,octa-cis-undecaprenyl diphosphate + beta-D-GlcNAc-(1-&gt;4)-Mur2Ac(oyl-L-Ala-gamma-D-Glu-L-Lys-D-Ala-D-Ala)-di-trans,octa-cis-undecaprenyl diphosphate = [GlcNAc-(1-&gt;4)-Mur2Ac(oyl-L-Ala-gamma-D-Glu-L-Lys-D-Ala-D-Ala)](n+1)-di-trans,octa-cis-undecaprenyl diphosphate + di-trans,octa-cis-undecaprenyl diphosphate + H(+). It functions in the pathway cell wall biogenesis; peptidoglycan biosynthesis. Functionally, peptidoglycan polymerase that is essential for cell division. The chain is Probable peptidoglycan glycosyltransferase FtsW from Halorhodospira halophila (strain DSM 244 / SL1) (Ectothiorhodospira halophila (strain DSM 244 / SL1)).